Here is a 1086-residue protein sequence, read N- to C-terminus: Isoleucine--tRNA ligase (1086 aa).

The 'HIGH' region signature appears at 53-63 (PFANGLPHYGH). The 'KMSKS' region signature appears at 624–628 (KLSKR). Residue lysine 627 coordinates ATP.

Belongs to the class-I aminoacyl-tRNA synthetase family. IleS type 2 subfamily. Monomer. The cofactor is Zn(2+).

The protein localises to the cytoplasm. The catalysed reaction is tRNA(Ile) + L-isoleucine + ATP = L-isoleucyl-tRNA(Ile) + AMP + diphosphate. Catalyzes the attachment of isoleucine to tRNA(Ile). As IleRS can inadvertently accommodate and process structurally similar amino acids such as valine, to avoid such errors it has two additional distinct tRNA(Ile)-dependent editing activities. One activity is designated as 'pretransfer' editing and involves the hydrolysis of activated Val-AMP. The other activity is designated 'posttransfer' editing and involves deacylation of mischarged Val-tRNA(Ile). The chain is Isoleucine--tRNA ligase from Rickettsia prowazekii (strain Madrid E).